The primary structure comprises 180 residues: NADH-quinone oxidoreductase subunit B (180 aa).

Positions 59, 60, 124, and 154 each coordinate [4Fe-4S] cluster.

It belongs to the complex I 20 kDa subunit family. NDH-1 is composed of 14 different subunits. Subunits NuoB, C, D, E, F, and G constitute the peripheral sector of the complex. [4Fe-4S] cluster serves as cofactor.

It localises to the cell inner membrane. It catalyses the reaction a quinone + NADH + 5 H(+)(in) = a quinol + NAD(+) + 4 H(+)(out). In terms of biological role, NDH-1 shuttles electrons from NADH, via FMN and iron-sulfur (Fe-S) centers, to quinones in the respiratory chain. The immediate electron acceptor for the enzyme in this species is believed to be ubiquinone. Couples the redox reaction to proton translocation (for every two electrons transferred, four hydrogen ions are translocated across the cytoplasmic membrane), and thus conserves the redox energy in a proton gradient. This is NADH-quinone oxidoreductase subunit B from Beijerinckia indica subsp. indica (strain ATCC 9039 / DSM 1715 / NCIMB 8712).